A 490-amino-acid chain; its full sequence is GTPase Der (490 aa).

2 EngA-type G domains span residues 3–166 (PVVA…MDDV) and 203–376 (IKLA…DSST). Residues 9 to 16 (GRPNVGKS), 56 to 60 (DTGGI), 118 to 121 (NKTD), 209 to 216 (GRPNVGKS), 256 to 260 (DTAGV), and 321 to 324 (NKWD) each bind GTP. The 85-residue stretch at 377–461 (RRVSTAMLTR…PIRIQFKEGE (85 aa)) folds into the KH-like domain.

The protein belongs to the TRAFAC class TrmE-Era-EngA-EngB-Septin-like GTPase superfamily. EngA (Der) GTPase family. In terms of assembly, associates with the 50S ribosomal subunit.

GTPase that plays an essential role in the late steps of ribosome biogenesis. This chain is GTPase Der, found in Salmonella choleraesuis (strain SC-B67).